We begin with the raw amino-acid sequence, 465 residues long: Cysteine--tRNA ligase (465 aa).

Cys-29 provides a ligand contact to Zn(2+). Residues 31 to 41 (PTVYNYIHIGN) carry the 'HIGH' region motif. Residues Cys-209, His-234, and Glu-238 each coordinate Zn(2+). The 'KMSKS' region motif lies at 266–270 (KMSKS). Position 269 (Lys-269) interacts with ATP. Position 270 is a phosphoserine (Ser-270).

It belongs to the class-I aminoacyl-tRNA synthetase family. Monomer. Zn(2+) is required as a cofactor.

The protein resides in the cytoplasm. The catalysed reaction is tRNA(Cys) + L-cysteine + ATP = L-cysteinyl-tRNA(Cys) + AMP + diphosphate. This Bacillus cereus (strain G9842) protein is Cysteine--tRNA ligase.